The chain runs to 48 residues: U-reduvitoxin-Pr5a (48 aa).

The first 19 residues, 1–19, serve as a signal peptide directing secretion; that stretch reads MRLFLIFTFIVASLASVYG. 3 disulfide bridges follow: Cys20-Cys34, Cys27-Cys39, and Cys33-Cys44.

Belongs to the venom Ptu1-like knottin family. Expressed by the venom gland.

The protein localises to the secreted. Functionally, binds reversibly and blocks P/Q-type voltage-gated calcium channels (Cav). This chain is U-reduvitoxin-Pr5a, found in Platymeris rhadamanthus (Red spot assassin bug).